The chain runs to 152 residues: MGFYISSLLICVFLGIVRFASAGTYSSSYEAHRNYLLNIFHNPFVNDSIKERNIPELIAFYHRYPTEVPLSDEDRQQFERFIHDYREYRRVLIDGVPPQGGSFGNIFGHFLGRVGTRYILSLFNKQREEGLSNQATNSTIPPLRIQYLTKLS.

The signal sequence occupies residues 1–22; it reads MGFYISSLLICVFLGIVRFASA.

This sequence belongs to the Turandot family.

It localises to the secreted. In terms of biological role, a humoral factor that may play a role in stress tolerance. The chain is Protein Turandot X from Drosophila erecta (Fruit fly).